The sequence spans 466 residues: Zinc metalloproteinase/disintegrin (466 aa).

Residues 1-6 form the signal peptide; sequence FPYQGS. The propeptide occupies 7-174; the sequence is SIILESGNVN…PIKKASQLIV (168 aa). One can recognise a Peptidase M12B domain in the interval 180-377; the sequence is RYMEIVIVVD…ENPPCILNKP (198 aa). E183 and D267 together coordinate Ca(2+). Disulfide bonds link C291-C372, C331-C356, and C333-C339. Residue H316 participates in Zn(2+) binding. The active site involves E317. 2 residues coordinate Zn(2+): H320 and H326. C372 and N375 together coordinate Ca(2+). The propeptide occupies 377 to 401; the sequence is PLRTDTVSTPVSGNELLEAGKDYDR. One can recognise a Disintegrin domain in the interval 385–466; sequence TPVSGNELLE…GDCPRNPYHA (82 aa). 3 cysteine pairs are disulfide-bonded: C422/C428, C427/C452, and C440/C459. A Cell attachment site motif is present at residues 444–446; the sequence is RGD.

It belongs to the venom metalloproteinase (M12B) family. P-II subfamily. P-IIa sub-subfamily. As to quaternary structure, monomer. Requires Zn(2+) as cofactor. In terms of tissue distribution, expressed by the venom gland.

It is found in the secreted. Its function is as follows. Impairs hemostasis in the envenomed animal. In terms of biological role, inhibits platelet aggregation induced by ADP, thrombin, platelet-activating factor and collagen. Acts by inhibiting fibrinogen interaction with platelet receptors GPIIb/GPIIIa (ITGA2B/ITGB3). In Deinagkistrodon acutus (Hundred-pace snake), this protein is Zinc metalloproteinase/disintegrin.